The sequence spans 154 residues: Ubiquitin-conjugating enzyme E2 L3 (154 aa).

Residues 2–149 (AASRRLMKEL…AEEFTKKYGE (148 aa)) enclose the UBC core domain. The Glycyl thioester intermediate role is filled by Cys86. The residue at position 131 (Lys131) is an N6-acetyllysine.

This sequence belongs to the ubiquitin-conjugating enzyme family. As to quaternary structure, interacts with PRKN; involved in ubiquitination and degradation of misfolded proteins. Interacts with UBE3A. Interacts with CCNB1IP1, CBL, ZAP70, RNF19A, RNF19B and RNF144B. Interacts with ARIH1. Interacts with ARIH2 (via RING-type 1). Interacts with NCOA1; they functionally interact to regulate progesterone receptor transcriptional activity. Interacts with NDFIP1 (via N-terminus); the interaction mediates recruitment of UBE2L3 to ITCH and causes MAP3K7 ubiquitination. Post-translationally, ubiquitinated. The alteration of UBE2L3 protein levels during the S-phase of the cell cycle is due to ubiquitin-dependent proteasomal degradation. Autoubiquitinated in vitro.

Its subcellular location is the nucleus. The protein resides in the cytoplasm. The catalysed reaction is S-ubiquitinyl-[E1 ubiquitin-activating enzyme]-L-cysteine + [E2 ubiquitin-conjugating enzyme]-L-cysteine = [E1 ubiquitin-activating enzyme]-L-cysteine + S-ubiquitinyl-[E2 ubiquitin-conjugating enzyme]-L-cysteine.. It functions in the pathway protein modification; protein ubiquitination. In terms of biological role, ubiquitin-conjugating enzyme E2 that specifically acts with HECT-type and RBR family E3 ubiquitin-protein ligases. Does not function with most RING-containing E3 ubiquitin-protein ligases because it lacks intrinsic E3-independent reactivity with lysine: in contrast, it has activity with the RBR family E3 enzymes, such as PRKN, RNF31 and ARIH1, that function like RING-HECT hybrids. Accepts ubiquitin from the E1 complex and catalyzes its covalent attachment to other proteins. Mediates ubiquitination by the CUL9-RBX1 complex. In vitro catalyzes 'Lys-11'-linked polyubiquitination. Involved in the selective degradation of short-lived and abnormal proteins. Down-regulated during the S-phase it is involved in progression through the cell cycle. Regulates nuclear hormone receptors transcriptional activity. May play a role in myelopoiesis. This chain is Ubiquitin-conjugating enzyme E2 L3 (UBE2L3), found in Pongo abelii (Sumatran orangutan).